Reading from the N-terminus, the 946-residue chain is Bifunctional glutamine synthetase adenylyltransferase/adenylyl-removing enzyme (946 aa).

An adenylyl removase region spans residues 1 to 440; it reads MKPLSSPLQQ…VFNELIGDDE (440 aa). The tract at residues 449-946 is adenylyl transferase; sequence SEQWRELWQD…ASWQKWLVEE (498 aa).

Belongs to the GlnE family. Mg(2+) is required as a cofactor.

It carries out the reaction [glutamine synthetase]-O(4)-(5'-adenylyl)-L-tyrosine + phosphate = [glutamine synthetase]-L-tyrosine + ADP. The enzyme catalyses [glutamine synthetase]-L-tyrosine + ATP = [glutamine synthetase]-O(4)-(5'-adenylyl)-L-tyrosine + diphosphate. Functionally, involved in the regulation of glutamine synthetase GlnA, a key enzyme in the process to assimilate ammonia. When cellular nitrogen levels are high, the C-terminal adenylyl transferase (AT) inactivates GlnA by covalent transfer of an adenylyl group from ATP to specific tyrosine residue of GlnA, thus reducing its activity. Conversely, when nitrogen levels are low, the N-terminal adenylyl removase (AR) activates GlnA by removing the adenylyl group by phosphorolysis, increasing its activity. The regulatory region of GlnE binds the signal transduction protein PII (GlnB) which indicates the nitrogen status of the cell. This chain is Bifunctional glutamine synthetase adenylyltransferase/adenylyl-removing enzyme, found in Escherichia coli O8 (strain IAI1).